We begin with the raw amino-acid sequence, 277 residues long: Phosphate import ATP-binding protein PstB 2 (277 aa).

The ABC transporter domain occupies 31 to 272 (IEVPGLNLFY…PAKKQTEDYI (242 aa)). 63–70 (GPSGCGKS) provides a ligand contact to ATP.

The protein belongs to the ABC transporter superfamily. Phosphate importer (TC 3.A.1.7) family. The complex is composed of two ATP-binding proteins (PstB), two transmembrane proteins (PstC and PstA) and a solute-binding protein (PstS).

The protein localises to the cell inner membrane. The enzyme catalyses phosphate(out) + ATP + H2O = ADP + 2 phosphate(in) + H(+). Its function is as follows. Part of the ABC transporter complex PstSACB involved in phosphate import. Responsible for energy coupling to the transport system. The sequence is that of Phosphate import ATP-binding protein PstB 2 from Pseudomonas syringae pv. syringae (strain B728a).